The sequence spans 157 residues: MIRIGQGYDVHKLAYDRELIVGGIKIPYEKGLLGHSDADVLLHAITDAIIGAIGAGDIGHFFPDTDMAFKDADSAELLEEIWQKVEADGFRLGNLDATIIAEKPKMAPYVEQMKLRIAELLHADSAQVNVKATTTEKLGFTGREEGIASLAVVLLEK.

The a divalent metal cation site is built by aspartate 9 and histidine 11. Residues 9–11 (DVH) and 35–36 (HS) contribute to the 4-CDP-2-C-methyl-D-erythritol 2-phosphate site. A divalent metal cation is bound at residue histidine 43. 4-CDP-2-C-methyl-D-erythritol 2-phosphate contacts are provided by residues 57–59 (DIG), 62–66 (FPDTD), 101–107 (AEKPKMA), 133–136 (TTTE), phenylalanine 140, and arginine 143.

This sequence belongs to the IspF family. Homotrimer. Requires a divalent metal cation as cofactor.

The enzyme catalyses 4-CDP-2-C-methyl-D-erythritol 2-phosphate = 2-C-methyl-D-erythritol 2,4-cyclic diphosphate + CMP. It participates in isoprenoid biosynthesis; isopentenyl diphosphate biosynthesis via DXP pathway; isopentenyl diphosphate from 1-deoxy-D-xylulose 5-phosphate: step 4/6. Its function is as follows. Involved in the biosynthesis of isopentenyl diphosphate (IPP) and dimethylallyl diphosphate (DMAPP), two major building blocks of isoprenoid compounds. Catalyzes the conversion of 4-diphosphocytidyl-2-C-methyl-D-erythritol 2-phosphate (CDP-ME2P) to 2-C-methyl-D-erythritol 2,4-cyclodiphosphate (ME-CPP) with a corresponding release of cytidine 5-monophosphate (CMP). The protein is 2-C-methyl-D-erythritol 2,4-cyclodiphosphate synthase of Listeria monocytogenes serotype 4b (strain F2365).